Here is a 207-residue protein sequence, read N- to C-terminus: BTB/POZ domain-containing protein At1g01640 (207 aa).

One can recognise a BTB domain in the interval 24–94 (TDVLVKPGEE…LYSGNLKAPY (71 aa)).

As to quaternary structure, interacts with CUL3A.

It participates in protein modification; protein ubiquitination. Its function is as follows. May act as a substrate-specific adapter of an E3 ubiquitin-protein ligase complex (CUL3-RBX1-BTB) which mediates the ubiquitination and subsequent proteasomal degradation of target proteins. In Arabidopsis thaliana (Mouse-ear cress), this protein is BTB/POZ domain-containing protein At1g01640.